A 496-amino-acid chain; its full sequence is tRNA-2-methylthio-N(6)-dimethylallyladenosine synthase (496 aa).

The region spanning 43–160 (KKVFVTTQGC…LPELYDQSHQ (118 aa)) is the MTTase N-terminal domain. Residues Cys52, Cys89, Cys123, Cys204, Cys208, and Cys211 each coordinate [4Fe-4S] cluster. The 233-residue stretch at 190-422 (RVEGFKAFVS…QKVIIDSTLA (233 aa)) folds into the Radical SAM core domain. The TRAM domain maps to 425 to 493 (HEMVGTTTRV…PHMVKGEIEA (69 aa)).

Belongs to the methylthiotransferase family. MiaB subfamily. Monomer. The cofactor is [4Fe-4S] cluster.

The protein resides in the cytoplasm. The enzyme catalyses N(6)-dimethylallyladenosine(37) in tRNA + (sulfur carrier)-SH + AH2 + 2 S-adenosyl-L-methionine = 2-methylsulfanyl-N(6)-dimethylallyladenosine(37) in tRNA + (sulfur carrier)-H + 5'-deoxyadenosine + L-methionine + A + S-adenosyl-L-homocysteine + 2 H(+). Its function is as follows. Catalyzes the methylthiolation of N6-(dimethylallyl)adenosine (i(6)A), leading to the formation of 2-methylthio-N6-(dimethylallyl)adenosine (ms(2)i(6)A) at position 37 in tRNAs that read codons beginning with uridine. The sequence is that of tRNA-2-methylthio-N(6)-dimethylallyladenosine synthase from Psychrobacter arcticus (strain DSM 17307 / VKM B-2377 / 273-4).